Reading from the N-terminus, the 418-residue chain is MSLNHSDLMFYCPVDDLPHPAASGVNDRTLDWASGQGIPTADRDAGRLRAMAPGLLAARIAPDARGPVLDAFADHHTWLFAFDDEYCDRADGSGITEWASFLARLHRVVETGESALLPGNPYGLALRDIACRLSTYTTPAQLAEWLEALRSYFAALVWERSRRRDDDRLQSLDDYLLLRLRNGAMHTSITLLDTVNGYVLPRELRETPGVRALVEMTALLVSVDNDILSHHKESTSGTREANLLDVLGRTGHTTPGEAVAQAVALRNEIMRQFVRVAERVRTPAAVPELYRFTTGLARWIRANLDFSLTTTRYTGPVTERAALSPHEVPPLSGQGPAPARSDVIGWWWRIPEPLPEPGSDGADTPVRKRRAGDRPPTAGRGGAPHHQRTGPPPPVLPGGITASRSSGLQQSTWRREHR.

Residues Asp83 and Asp88 each contribute to the Mg(2+) site. A DDXXXD motif motif is present at residues 83–88; it reads DDEYCD. Arg179 contributes to the substrate binding site. Mg(2+)-binding residues include Asn225 and Ser229. Substrate is bound at residue Lys232. Mg(2+) is bound at residue Glu233. A substrate-binding site is contributed by 312–313; sequence RY. The segment at 354 to 418 is disordered; it reads LPEPGSDGAD…QQSTWRREHR (65 aa). The segment covering 402-412 has biased composition (polar residues); the sequence is ASRSSGLQQST.

It belongs to the terpene synthase family. The cofactor is Mg(2+).

It catalyses the reaction (2E,6E)-farnesyl diphosphate + H2O = (+)-T-muurolol + diphosphate. The protein operates within secondary metabolite biosynthesis; terpenoid biosynthesis. Catalyzes the conversion of (2E,6E)-farnesyl diphosphate (FPP) into (+)-T-muurolol via a 1,10-cyclization, which requires isomerization of FPP to nerolidyl diphosphate (NPP) and then abstraction of the pyrophosphate from intermediate NPP leading to a (E,Z)-germacradienyl (helminthogermacradienyl) cation. The chain is (+)-T-muurolol synthase ((2E,6E)-farnesyl diphosphate cyclizing) from Streptomyces clavuligerus.